The primary structure comprises 40 residues: U2-myrmicitoxin-Tb1a (40 aa).

The N-terminal stretch at 1–3 is a signal peptide; sequence AEA. Positions 4-29 are excised as a propeptide; it reads MAEAMADAMADAMADAMADAMAEAAA. At Arg-39 the chain carries Arginine amide.

It belongs to the formicidae venom precursor-01 superfamily. Expressed by the venom gland.

The protein resides in the secreted. Its function is as follows. Venom protein with unknown function. Does not induce paralysis when a high dose is administered by intrathoracic injection into the blowfly Lucilia caesar. The chain is U2-myrmicitoxin-Tb1a from Tetramorium bicarinatum (Tramp ant).